Reading from the N-terminus, the 730-residue chain is 1,4-alpha-glucan branching enzyme GlgB (730 aa).

Asp405 acts as the Nucleophile in catalysis. Residue Glu458 is the Proton donor of the active site.

The protein belongs to the glycosyl hydrolase 13 family. GlgB subfamily. Monomer.

The catalysed reaction is Transfers a segment of a (1-&gt;4)-alpha-D-glucan chain to a primary hydroxy group in a similar glucan chain.. The protein operates within glycan biosynthesis; glycogen biosynthesis. In terms of biological role, catalyzes the formation of the alpha-1,6-glucosidic linkages in glycogen by scission of a 1,4-alpha-linked oligosaccharide from growing alpha-1,4-glucan chains and the subsequent attachment of the oligosaccharide to the alpha-1,6 position. The chain is 1,4-alpha-glucan branching enzyme GlgB from Haemophilus influenzae (strain PittGG).